The chain runs to 630 residues: Plastin-1 (630 aa).

Residue Met-1 is modified to N-acetylmethionine. 2 EF-hand domains span residues 11 to 46 (EELE…ASLP) and 51 to 86 (KVRE…LKSK). Residues Asp-24, Asp-26, Ser-28, Tyr-30, Glu-35, Asp-64, Asn-66, Asp-68, Arg-70, and Glu-75 each coordinate Ca(2+). Actin-binding stretches follow at residues 108 to 381 (TSSI…GLHK) and 382 to 626 (PDNN…GKGL). Calponin-homology (CH) domains are found at residues 122 to 238 (EEEK…KVGL), 266 to 377 (LSPE…NTYP), 396 to 505 (SKEE…RRYT), and 517 to 626 (KVND…GKGL).

In terms of assembly, monomer. Post-translationally, phosphorylated.

The protein resides in the cytoplasm. Its subcellular location is the cell projection. The protein localises to the stereocilium. In terms of biological role, actin-bundling protein. In the inner ear, it is required for stereocilia formation. Mediates liquid packing of actin filaments that is necessary for stereocilia to grow to their proper dimensions. This is Plastin-1 (PLS1) from Bos taurus (Bovine).